Here is a 122-residue protein sequence, read N- to C-terminus: UPF0102 protein Smed_3545 (122 aa).

This sequence belongs to the UPF0102 family.

This Sinorhizobium medicae (strain WSM419) (Ensifer medicae) protein is UPF0102 protein Smed_3545.